The following is a 238-amino-acid chain: Group 3 late-embryogenesis abundant protein, mitochondrial (238 aa).

The disordered stretch occupies residues S41–G62. A coiled-coil region spans residues N50–Q202. 6 LEA 11-mer repeat repeats span residues K64–A74, K89–L99, K140–T150, K151–V161, K179–V189, and K190–A200. Basic and acidic residues-rich tracts occupy residues A182–A200 and D213–S225. The disordered stretch occupies residues A182–N238. Positions Q226 to N238 are enriched in low complexity.

This sequence belongs to the LEA type 4 family.

The protein resides in the mitochondrion. Functionally, mitochondrial heat soluble protein acting as a molecular shield in water-deficient condition. In Hypsibius exemplaris (Freshwater tardigrade), this protein is Group 3 late-embryogenesis abundant protein, mitochondrial.